The sequence spans 185 residues: Elongation factor P (185 aa).

The protein belongs to the elongation factor P family.

Its subcellular location is the cytoplasm. It participates in protein biosynthesis; polypeptide chain elongation. Functionally, involved in peptide bond synthesis. Stimulates efficient translation and peptide-bond synthesis on native or reconstituted 70S ribosomes in vitro. Probably functions indirectly by altering the affinity of the ribosome for aminoacyl-tRNA, thus increasing their reactivity as acceptors for peptidyl transferase. In Petrotoga mobilis (strain DSM 10674 / SJ95), this protein is Elongation factor P.